The primary structure comprises 342 residues: Putative anthocyanidin reductase (342 aa).

Residues R44, K51, 71 to 72 (EL), 91 to 93 (VAT), Y172, K176, 199 to 202 (PVLV), and S214 contribute to the NADP(+) site. The active-site Proton donor is K176.

It belongs to the NAD(P)-dependent epimerase/dehydratase family. Dihydroflavonol-4-reductase subfamily. As to expression, highly expressed in leaves and weakly in stems. Not expressed in roots.

It functions in the pathway secondary metabolite biosynthesis; flavonoid biosynthesis. The protein is Putative anthocyanidin reductase of Ginkgo biloba (Ginkgo).